Reading from the N-terminus, the 22-residue chain is Piscidin-3 (22 aa).

G22 bears the Glycine amide mark.

Belongs to the pleurocidin family. In terms of tissue distribution, mast cells in gill, skin and gut, and in lining blood vessels in the viscera.

It localises to the secreted. Its subcellular location is the membrane. In terms of biological role, antimicrobial peptide with broad-spectrum activity against Gram-positive and Gram-negative bacteria. Rapidly inactivates both channel catfish herpesvirus (ED(50)=11 uM) and frog virus 3 (ED(50)=16 uM) over a wide temperature range. Has hemolytic activity. This Morone chrysops x Morone saxatilis (White bass x Striped bass) protein is Piscidin-3.